The primary structure comprises 416 residues: 2-amino-3-ketobutyrate coenzyme A ligase, mitochondrial (416 aa).

The N-terminal 18 residues, 1–18 (MWASFMWHGALSPGRRAH), are a transit peptide targeting the mitochondrion. Residue lysine 42 is modified to N6-acetyllysine; alternate. Residue lysine 42 is modified to N6-succinyllysine; alternate. A pyridoxal 5'-phosphate-binding site is contributed by 131–132 (CF). Histidine 156 is a substrate binding site. Lysine 184 is modified (N6-acetyllysine; alternate). Lysine 184 carries the N6-succinyllysine; alternate modification. Pyridoxal 5'-phosphate contacts are provided by residues serine 203, 259–262 (TLGK), and 292–293 (SN). At lysine 262 the chain carries N6-(pyridoxal phosphate)lysine. Lysine 323 and lysine 365 each carry N6-succinyllysine. Lysine 380 is modified (N6-acetyllysine; alternate). Lysine 380 bears the N6-succinyllysine; alternate mark. Arginine 386 provides a ligand contact to substrate.

Belongs to the class-II pyridoxal-phosphate-dependent aminotransferase family. It depends on pyridoxal 5'-phosphate as a cofactor.

It localises to the mitochondrion. It is found in the nucleus. It catalyses the reaction glycine + acetyl-CoA = (2S)-2-amino-3-oxobutanoate + CoA. The protein operates within amino-acid degradation; L-threonine degradation via oxydo-reductase pathway; glycine from L-threonine: step 2/2. Pyridoxal phosphate (PLP) dependent enzyme, which catalyzes the cleavage of 2-amino-3-oxobutanoate to glycine and acetyl-CoA. Catalyzes the second reaction step on the main metabolic degradation pathway for L-threonine. The protein is 2-amino-3-ketobutyrate coenzyme A ligase, mitochondrial (Gcat) of Mus musculus (Mouse).